Consider the following 363-residue polypeptide: UDP-N-acetylglucosamine--N-acetylmuramyl-(pentapeptide) pyrophosphoryl-undecaprenol N-acetylglucosamine transferase (363 aa).

Residues 12 to 14 (TAG), Arg-166, Ser-196, and Gln-291 contribute to the UDP-N-acetyl-alpha-D-glucosamine site.

This sequence belongs to the glycosyltransferase 28 family. MurG subfamily.

The protein localises to the cell inner membrane. The enzyme catalyses di-trans,octa-cis-undecaprenyl diphospho-N-acetyl-alpha-D-muramoyl-L-alanyl-D-glutamyl-meso-2,6-diaminopimeloyl-D-alanyl-D-alanine + UDP-N-acetyl-alpha-D-glucosamine = di-trans,octa-cis-undecaprenyl diphospho-[N-acetyl-alpha-D-glucosaminyl-(1-&gt;4)]-N-acetyl-alpha-D-muramoyl-L-alanyl-D-glutamyl-meso-2,6-diaminopimeloyl-D-alanyl-D-alanine + UDP + H(+). Its pathway is cell wall biogenesis; peptidoglycan biosynthesis. Functionally, cell wall formation. Catalyzes the transfer of a GlcNAc subunit on undecaprenyl-pyrophosphoryl-MurNAc-pentapeptide (lipid intermediate I) to form undecaprenyl-pyrophosphoryl-MurNAc-(pentapeptide)GlcNAc (lipid intermediate II). This chain is UDP-N-acetylglucosamine--N-acetylmuramyl-(pentapeptide) pyrophosphoryl-undecaprenol N-acetylglucosamine transferase, found in Legionella pneumophila (strain Paris).